We begin with the raw amino-acid sequence, 142 residues long: Malate dehydrogenase, mitochondrial (142 aa).

NAD(+) contacts are provided by residues 1–6 (ASGGIG) and Asp-26. The substrate site is built by Arg-73 and Arg-79. NAD(+)-binding positions include Asn-86 and 109-111 (ITN). Residue Asn-111 participates in substrate binding.

It belongs to the LDH/MDH superfamily. MDH type 1 family. As to quaternary structure, homodimer.

The protein localises to the mitochondrion matrix. It catalyses the reaction (S)-malate + NAD(+) = oxaloacetate + NADH + H(+). The protein is Malate dehydrogenase, mitochondrial of Schistosoma mansoni (Blood fluke).